Here is a 64-residue protein sequence, read N- to C-terminus: Neurotoxin lambda-MeuTx (64 aa).

An N-terminal signal peptide occupies residues 1 to 18; it reads MSTFIVVFLLLTAILCHA. Positions 19–27 are excised as a propeptide; that stretch reads EHAIDETAR. 3 cysteine pairs are disulfide-bonded: C29-C43, C36-C49, and C42-C58.

Belongs to the scorpion calcin-like family. As to expression, expressed by the venom gland.

Its subcellular location is the secreted. Functionally, voltage-gated potassium channel (Kv) inhibitor. In addition it may increase intracellular calcium release through the activation of nuclear inositol 1,4,5-trisphosphate receptors (ITPR) of cardiomyocytes, thereby causing an increase in the contraction frequency of these cells. In Mesobuthus eupeus (Lesser Asian scorpion), this protein is Neurotoxin lambda-MeuTx.